A 157-amino-acid polypeptide reads, in one-letter code: Transcription elongation factor GreA (157 aa).

Residues 47-75 (SGEYEDAKKAQALLEGRIRELKHLLSRAE) adopt a coiled-coil conformation.

This sequence belongs to the GreA/GreB family.

Its function is as follows. Necessary for efficient RNA polymerase transcription elongation past template-encoded arresting sites. The arresting sites in DNA have the property of trapping a certain fraction of elongating RNA polymerases that pass through, resulting in locked ternary complexes. Cleavage of the nascent transcript by cleavage factors such as GreA or GreB allows the resumption of elongation from the new 3'terminus. GreA releases sequences of 2 to 3 nucleotides. The protein is Transcription elongation factor GreA of Chloroflexus aurantiacus (strain ATCC 29366 / DSM 635 / J-10-fl).